Here is a 419-residue protein sequence, read N- to C-terminus: Putative competence-damage inducible protein (419 aa).

The protein belongs to the CinA family.

The sequence is that of Putative competence-damage inducible protein from Lysinibacillus sphaericus (strain C3-41).